The sequence spans 247 residues: Proteasome subunit alpha (247 aa).

It belongs to the peptidase T1A family. As to quaternary structure, the 20S proteasome core is composed of 14 alpha and 14 beta subunits that assemble into four stacked heptameric rings, resulting in a barrel-shaped structure. The two inner rings, each composed of seven catalytic beta subunits, are sandwiched by two outer rings, each composed of seven alpha subunits. The catalytic chamber with the active sites is on the inside of the barrel. Has a gated structure, the ends of the cylinder being occluded by the N-termini of the alpha-subunits. Is capped at one or both ends by the proteasome regulatory ATPase, PAN.

The protein localises to the cytoplasm. With respect to regulation, the formation of the proteasomal ATPase PAN-20S proteasome complex, via the docking of the C-termini of PAN into the intersubunit pockets in the alpha-rings, triggers opening of the gate for substrate entry. Interconversion between the open-gate and close-gate conformations leads to a dynamic regulation of the 20S proteasome proteolysis activity. Component of the proteasome core, a large protease complex with broad specificity involved in protein degradation. The chain is Proteasome subunit alpha from Methanosarcina acetivorans (strain ATCC 35395 / DSM 2834 / JCM 12185 / C2A).